The following is a 51-amino-acid chain: Large ribosomal subunit protein bL33 (51 aa).

The protein belongs to the bacterial ribosomal protein bL33 family.

The polypeptide is Large ribosomal subunit protein bL33 (Pseudoalteromonas atlantica (strain T6c / ATCC BAA-1087)).